We begin with the raw amino-acid sequence, 115 residues long: Replication initiation control protein YabA (115 aa).

4 residues coordinate Zn(2+): histidine 90, cysteine 92, cysteine 106, and cysteine 109.

Belongs to the YabA family. In terms of assembly, homotetramer. Interacts with both DnaA and DnaN, acting as a bridge between these two proteins. The cofactor is Zn(2+).

The protein resides in the cytoplasm. It localises to the nucleoid. Functionally, involved in control of chromosome replication initiation. Inhibits the cooperative binding of DnaA to the oriC region, thus negatively regulating initiation of chromosome replication. Inhibits the ability of DnaA-ATP to form a helix on DNA; does not disassemble preformed DnaA-DNA helices. Decreases the residence time of DnaA on the chromosome at its binding sites (oriC, replication forks and promoter-binding sites). Tethers DnaA to the replication machinery via the DNA polymerase beta sliding clamp subunit (dnaN). Associates with oriC and other DnaA targets on the chromosome in a DnaA-dependent manner. The sequence is that of Replication initiation control protein YabA from Staphylococcus epidermidis (strain ATCC 35984 / DSM 28319 / BCRC 17069 / CCUG 31568 / BM 3577 / RP62A).